The following is a 371-amino-acid chain: Putative F-box protein At1g58090 (371 aa).

Residues 1–46 form the F-box domain; that stretch reads MVSKKLPLDLEEEILFRVPPRSLVRFRSVCREWNTLFKNKRFINKN.

This chain is Putative F-box protein At1g58090, found in Arabidopsis thaliana (Mouse-ear cress).